Reading from the N-terminus, the 45-residue chain is Alpha-conotoxin-like Lp1.10 (45 aa).

The propeptide occupies Val1–Arg27. Cystine bridges form between Cys30–Cys36 and Cys31–Cys44. The interval His32–Ala34 is lacks the Ser-Xaa-Pro motif that is crucial for potent interaction with nAChR. Cys44 bears the Cysteine amide mark.

It belongs to the conotoxin A superfamily. Expressed by the venom duct.

The protein resides in the secreted. Alpha-conotoxins act on postsynaptic membranes, they bind to the nicotinic acetylcholine receptors (nAChR) and thus inhibit them. Has possibly a distinct nAChR binding mode from other alpha-conotoxins, due to a different three residue motif (lacks the Ser-Xaa-Pro motif). The chain is Alpha-conotoxin-like Lp1.10 from Conus leopardus (Leopard cone).